Consider the following 311-residue polypeptide: Cytosolic Fe-S cluster assembly factor Nubp1 homolog (311 aa).

Residues Cys-9, Cys-23, Cys-26, and Cys-32 each coordinate [4Fe-4S] cluster. Position 63–70 (63–70) interacts with ATP; sequence GKGGVGKS. [4Fe-4S] cluster contacts are provided by Cys-240 and Cys-243.

Belongs to the Mrp/NBP35 ATP-binding proteins family. NUBP1/NBP35 subfamily. Heterotetramer of 2 Nubp1 and 2 Nubp2 chains. It depends on [4Fe-4S] cluster as a cofactor.

It is found in the cytoplasm. In terms of biological role, component of the cytosolic iron-sulfur (Fe/S) protein assembly (CIA) machinery. Required for maturation of extramitochondrial Fe-S proteins. The Nubp1-Nubp2 heterotetramer forms a Fe-S scaffold complex, mediating the de novo assembly of an Fe-S cluster and its transfer to target apoproteins. This is Cytosolic Fe-S cluster assembly factor Nubp1 homolog from Drosophila yakuba (Fruit fly).